Here is a 151-residue protein sequence, read N- to C-terminus: Large ribosomal subunit protein uL15 (151 aa).

Residues 1–51 (MKSLRLEDAVPQSGSRHRKLRVGRGHSAGQGKTSGRGMRGQKCRSGGGVRP) form a disordered region. The span at 15-24 (SRHRKLRVGR) shows a compositional bias: basic residues. The span at 26 to 38 (HSAGQGKTSGRGM) shows a compositional bias: gly residues.

The protein belongs to the universal ribosomal protein uL15 family. Part of the 50S ribosomal subunit.

Functionally, binds to the 23S rRNA. This chain is Large ribosomal subunit protein uL15, found in Gloeobacter violaceus (strain ATCC 29082 / PCC 7421).